The following is a 438-amino-acid chain: Probable trafficking protein particle complex subunit 13 homolog (438 aa).

The protein belongs to the TRAPPC13 family.

The chain is Probable trafficking protein particle complex subunit 13 homolog from Drosophila melanogaster (Fruit fly).